Here is a 436-residue protein sequence, read N- to C-terminus: Histone acetyltransferase type B subunit 2 (436 aa).

WD repeat units follow at residues 136–176 (DHKG…SLPT), 187–227 (GHTK…KGNK), 237–277 (HHSS…TTRA), 284–324 (QHRD…TKLH), and 328–368 (SHTD…EEQT). The segment at 370–374 (EDAQD) is interaction with the histone H4 N-terminus. One copy of the WD 6 repeat lies at 385–425 (GHTNRISDFSWNLNDPWVLCSAAEDNLLQVWKVADAIVGKD).

It belongs to the WD repeat RBAP46/RBAP48/MSI1 family. In terms of assembly, component of the HAT-B complex composed of at least hat1 and hat2. The HAT-B complex binds to histone H4 tail.

It is found in the cytoplasm. The protein resides in the nucleus. In terms of biological role, regulatory subunit of the histone acetylase B (HAT-B) complex. The complex acetylates 'Lys-12' of histone H4 which is required for telomeric silencing. This chain is Histone acetyltransferase type B subunit 2 (hat2), found in Aspergillus fumigatus (strain ATCC MYA-4609 / CBS 101355 / FGSC A1100 / Af293) (Neosartorya fumigata).